The primary structure comprises 522 residues: Maturase K (522 aa).

The protein belongs to the intron maturase 2 family. MatK subfamily.

The protein localises to the plastid. It localises to the chloroplast. In terms of biological role, usually encoded in the trnK tRNA gene intron. Probably assists in splicing its own and other chloroplast group II introns. This chain is Maturase K, found in Iris danfordiae (Danford iris).